Here is a 246-residue protein sequence, read N- to C-terminus: V-type proton ATPase subunit D (246 aa).

Belongs to the V-ATPase D subunit family. V-ATPase is a heteromultimeric enzyme made up of two complexes: the ATP-hydrolytic V1 complex and the proton translocation V0 complex. The V1 complex consists of three catalytic AB heterodimers that form a heterohexamer, three peripheral stalks each consisting of EG heterodimers, one central rotor including subunits D and F, and the regulatory subunits C and H. The proton translocation complex V0 consists of the proton transport subunit a, a ring of proteolipid subunits c9c'', rotary subunit d, subunits e and f, and the accessory subunits VhaAC45 and ATP6AP2.

Its function is as follows. Subunit of the V1 complex of vacuolar(H+)-ATPase (V-ATPase), a multisubunit enzyme composed of a peripheral complex (V1) that hydrolyzes ATP and a membrane integral complex (V0) that translocates protons. V-ATPase is responsible for acidifying and maintaining the pH of intracellular compartments and in some cell types, is targeted to the plasma membrane, where it is responsible for acidifying the extracellular environment. The chain is V-type proton ATPase subunit D from Manduca sexta (Tobacco hawkmoth).